The chain runs to 127 residues: UPF0325 protein ASA_3165 (127 aa).

This sequence belongs to the UPF0325 family.

This chain is UPF0325 protein ASA_3165, found in Aeromonas salmonicida (strain A449).